Reading from the N-terminus, the 872-residue chain is Exoglucanase A (872 aa).

The N-terminal stretch at 1-40 (MSTLGKRAGVRRRVRAVATAATATALVAVPLTTLATSASA) is a signal peptide. The catalytic stretch occupies residues 41-477 (APVHVDNPYA…PVIGGTTPVE (437 aa)). Disulfide bonds link Cys140–Cys202 and Cys374–Cys428. The active-site Proton donor is the Asp188. The active-site Nucleophile is Asp410. Fibronectin type-III domains follow at residues 484 to 569 (VPTG…TQSG), 579 to 667 (VPAG…TQTG), and 677 to 765 (VPTG…TQAA). The 110-residue stretch at 763–872 (QAATSGGCTV…TLNGVACTLG (110 aa)) folds into the CBM2 domain. Cys770 and Cys869 are oxidised to a cystine.

It belongs to the glycosyl hydrolase 6 (cellulase B) family.

It carries out the reaction Hydrolysis of (1-&gt;4)-beta-D-glucosidic linkages in cellulose and cellotetraose, releasing cellobiose from the non-reducing ends of the chains.. This enzyme hydrolyzes 1,4-beta-D-glucosidic linkages of cellulose. Weak activity against carboxymethylcellulose, bacterial microcrystalline cellulose and barley beta-glucan. Also has weak endoglucanase activity. Hydrolyzes glucosidic bonds with inversion of anomeric configuration. The chain is Exoglucanase A (cbhA) from Cellulomonas fimi (strain ATCC 484 / DSM 20113 / JCM 1341 / CCUG 24087 / LMG 16345 / NBRC 15513 / NCIMB 8980 / NCTC 7547 / NRS-133).